A 127-amino-acid polypeptide reads, in one-letter code: Protein ApaG (127 aa).

The ApaG domain maps to 3 to 127; the sequence is EGKKYQINIS…FTLAMPRVLH (125 aa).

The chain is Protein ApaG from Thiobacillus denitrificans (strain ATCC 25259 / T1).